The following is a 515-amino-acid chain: Protein aaim-1 (515 aa).

The N-terminal stretch at 1-16 (MRLLFFFSILYTASLC) is a signal peptide. 2 N-linked (GlcNAc...) asparagine glycosylation sites follow: N46 and N127. Positions 248 to 267 (RRTDPNSKFKPRPTTSQSNG) are disordered. N447 carries N-linked (GlcNAc...) asparagine glycosylation.

In terms of tissue distribution, expressed in the terminal bulb of the pharynx and the posterior of the intestine (at protein level). Expressed by intestinal cells and secreted into the intestinal lumen (at protein level).

The protein localises to the secreted. In terms of biological role, plays a role in promoting resistance to bacterial pathogens such as P.aeruginosa by inhibiting bacterial intestinal colonization. Functionally, (Microbial infection) Promotes infection by microsporidian pathogens such as N.parisii in the early larval stages of development. Involved in ensuring the proper orientation and location of the spore proteins of N.parisii during intestinal cell invasion. The chain is Protein aaim-1 from Caenorhabditis elegans.